The following is a 365-amino-acid chain: N5-carboxyaminoimidazole ribonucleotide synthase (365 aa).

ATP-binding positions include R93, K132, G137–Q143, E168–V171, E176, H199, and N249–E250. The ATP-grasp domain maps to K97–T279.

Belongs to the PurK/PurT family. In terms of assembly, homodimer.

It carries out the reaction 5-amino-1-(5-phospho-beta-D-ribosyl)imidazole + hydrogencarbonate + ATP = 5-carboxyamino-1-(5-phospho-D-ribosyl)imidazole + ADP + phosphate + 2 H(+). It functions in the pathway purine metabolism; IMP biosynthesis via de novo pathway; 5-amino-1-(5-phospho-D-ribosyl)imidazole-4-carboxylate from 5-amino-1-(5-phospho-D-ribosyl)imidazole (N5-CAIR route): step 1/2. Its function is as follows. Catalyzes the ATP-dependent conversion of 5-aminoimidazole ribonucleotide (AIR) and HCO(3)(-) to N5-carboxyaminoimidazole ribonucleotide (N5-CAIR). The sequence is that of N5-carboxyaminoimidazole ribonucleotide synthase from Aquifex aeolicus (strain VF5).